The following is a 377-amino-acid chain: tRNA-specific 2-thiouridylase MnmA (377 aa).

Residues 9-16 (AMSGGVDS) and leucine 35 each bind ATP. Cysteine 105 acts as the Nucleophile in catalysis. Cysteine 105 and cysteine 201 are oxidised to a cystine. ATP is bound at residue glycine 129. The interaction with tRNA stretch occupies residues 151 to 153 (KNQ). Catalysis depends on cysteine 201, which acts as the Cysteine persulfide intermediate. An interaction with tRNA region spans residues 307–308 (RY).

Belongs to the MnmA/TRMU family.

It is found in the cytoplasm. The enzyme catalyses S-sulfanyl-L-cysteinyl-[protein] + uridine(34) in tRNA + AH2 + ATP = 2-thiouridine(34) in tRNA + L-cysteinyl-[protein] + A + AMP + diphosphate + H(+). Its function is as follows. Catalyzes the 2-thiolation of uridine at the wobble position (U34) of tRNA, leading to the formation of s(2)U34. In Leptospira borgpetersenii serovar Hardjo-bovis (strain JB197), this protein is tRNA-specific 2-thiouridylase MnmA.